The following is a 371-amino-acid chain: Alanine dehydrogenase (371 aa).

Residues arginine 15 and lysine 75 each coordinate substrate. The Proton donor/acceptor role is filled by histidine 96. Residues serine 134, threonine 178–alanine 179, aspartate 198, lysine 203, serine 220, valine 239–leucine 240, isoleucine 267–aspartate 270, arginine 279, and valine 298–methionine 301 each bind NAD(+). Residue aspartate 270 is the Proton donor/acceptor of the active site. Positions 323 and 327 each coordinate Mg(2+).

It belongs to the AlaDH/PNT family. In terms of assembly, homohexamer. Trimer of dimers. Mg(2+) serves as cofactor.

It is found in the secreted. The catalysed reaction is L-alanine + NAD(+) + H2O = pyruvate + NH4(+) + NADH + H(+). Its pathway is amino-acid degradation; L-alanine degradation via dehydrogenase pathway; NH(3) and pyruvate from L-alanine: step 1/1. Its activity is regulated as follows. Inhibited by CuSO(4) and ZnCl(2). Catalyzes the reversible reductive amination of pyruvate to L-alanine. However, since the physiological environment of M.tuberculosis has a neutral pH, it can be assumed that the enzyme catalyzes exclusively the formation of L-alanine. May play a role in cell wall synthesis as L-alanine is an important constituent of the peptidoglycan layer. The protein is Alanine dehydrogenase (ald) of Mycobacterium tuberculosis (strain ATCC 25618 / H37Rv).